Reading from the N-terminus, the 352-residue chain is MIREDEVRKLVGEMREPFLQRPLGELDAVKEIKIKPEKRHISVKVALAKTGTAEQMQIQQEIVNVLKGAGAETVGLRFEELPEETVAKFRAPSAEKKTLLNMDNPPVFLAVASGKGGVGKSTVSVNLAISLARLGKKVGLIDADIYGFSVPDMMGITVRPTIEGEKLLPVERFGVKVMSMGFFVEENAPVVWRGPMLGKMLNNFFHEVEWGEVDYIVLDLPPGTGDVALDVHTMLPSCKEIIVSTPHPTAAFVAARAGSMAIKTDHEVVGVIENMAYYESAKTGEREYVFGKGGGDKLAEELNVPLLGRIPLKQPDWDKDQFAPSVYDENHPIGEIYQDIAKKIDAKMSVQV.

114–121 provides a ligand contact to ATP; the sequence is GKGGVGKS.

This sequence belongs to the Mrp/NBP35 ATP-binding proteins family. As to quaternary structure, homodimer. Interacts with BrxC.

Functionally, binds and transfers iron-sulfur (Fe-S) clusters to target apoproteins. Can hydrolyze ATP. Its function is as follows. Negatively regulates the expression of hpr/scoC. The effect on hpr/scoC may be indirect. The protein is Iron-sulfur cluster carrier protein (salA) of Bacillus subtilis (strain 168).